Reading from the N-terminus, the 364-residue chain is Probable UDP-arabinopyranose mutase 1 (364 aa).

The DXD motif signature appears at D103–D105. An N-linked (Glc...) arginine glycan is attached at R151.

Belongs to the RGP family. As to quaternary structure, homopentamer or homohexamer. It depends on Mn(2+) as a cofactor. Mg(2+) is required as a cofactor. Reversibly glycosylated by UDP-glucose, UDP-xylose and UDP-galactose, but not UDP-mannose.

Its subcellular location is the secreted. It is found in the cell wall. It localises to the cell junction. The protein localises to the plasmodesma. The protein resides in the golgi apparatus. It carries out the reaction UDP-beta-L-arabinofuranose = UDP-beta-L-arabinopyranose. Inhibited by inhibitor protein (IP) which may be a form of sucrose synthase. Probable UDP-L-arabinose mutase involved in the biosynthesis of cell wall non-cellulosic polysaccharides. Was initially shown to possess an autoglycosylating activity which is dependent on the presence of UDP-glucose and manganese. The polypeptide is Probable UDP-arabinopyranose mutase 1 (Pisum sativum (Garden pea)).